Here is a 172-residue protein sequence, read N- to C-terminus: uncharacterized protein (172 aa).

This is an uncharacterized protein from Rattus norvegicus (Rat).